Consider the following 232-residue polypeptide: Protein lin-7 homolog A (232 aa).

The short motif at 14-28 (MATLTVVQPLTLDRD) is the Kinase interacting site element. The region spanning 25 to 80 (LDRDVARAIELLEKLQESGEVPVHKLQSLKKVLQSEFCTAIREVYQYMHETITVNG) is the L27 domain. The PDZ domain occupies 108–190 (VVELPKTDEG…SVKLVVRYTP (83 aa)).

It belongs to the lin-7 family. As to quaternary structure, forms a complex with CASK and CASKIN1. Component of the brain-specific heterotrimeric complex (LIN-10-LIN-2-LIN-7 complex) composed of at least APBA1, CASK, and LIN7, which associates with the motor protein KIF17 to transport vesicles along microtubules. Can also interact with other modular proteins containing protein-protein interaction domains like PALS1, PALS2, MPP7, DLG1, DLG2 and DLG3 through its L27 domain. Interacts with DLG4 and GRIN2B as well as CDH1 and CTNNB1, the channels KCNJ12/Kir2.2, KCNJ4/Kir2.3 and probably KCNJ2/Kir2.1 and SLC6A12/BGT-1 via its PDZ domain. The association of LIN7A with cadherin and beta-catenin is calcium-dependent, occurs at synaptic junctions and requires the actin cytoskeleton. Interacts with EGFR, ERBB2, ERBB3 and ERBB4 with both PDZ and KID domains. Associates with KIF17 via APBA1. Interacts with HTR4. Forms a tripartite complex composed of DLG1, MPP7 and LIN7 (LIN7A or LIN7C). Interacts with MARCHF11. Ubiquitously expressed in brain and detected in lung, liver and testis (at protein level). Expression was detected only in brain.

Its subcellular location is the cell membrane. It localises to the basolateral cell membrane. It is found in the cell junction. The protein resides in the postsynaptic density membrane. The protein localises to the tight junction. Plays a role in establishing and maintaining the asymmetric distribution of channels and receptors at the plasma membrane of polarized cells. Forms membrane-associated multiprotein complexes that may regulate delivery and recycling of proteins to the correct membrane domains. The tripartite complex composed of LIN7 (LIN7A, LIN7B or LIN7C), CASK and APBA1 associates with the motor protein KIF17 to transport vesicles containing N-methyl-D-aspartate (NMDA) receptor subunit NR2B along microtubules. This complex may have the potential to couple synaptic vesicle exocytosis to cell adhesion in brain. Ensures the proper localization of GRIN2B (subunit 2B of the NMDA receptor) to neuronal postsynaptic density and may function in localizing synaptic vesicles at synapses where it is recruited by beta-catenin and cadherin. Required to localize Kir2 channels, GABA transporter (SLC6A12) and EGFR/ERBB1, ERBB2, ERBB3 and ERBB4 to the basolateral membrane of epithelial cells. The polypeptide is Protein lin-7 homolog A (Lin7a) (Rattus norvegicus (Rat)).